Reading from the N-terminus, the 335-residue chain is Probable peroxidase 26 (335 aa).

The first 18 residues, 1 to 18 (MVMIHIFLTVMVVGGVSL), serve as a signal peptide directing secretion. Intrachain disulfides connect C46–C122, C79–C84, C128–C331, and C205–C237. The active site involves R73. Positions 78, 81, 83, 85, and 87 each coordinate Ca(2+). Residue P168 coordinates substrate. H198 is a heme b binding site. S199 provides a ligand contact to Ca(2+). A glycan (N-linked (GlcNAc...) asparagine) is linked at N216. Ca(2+) is bound by residues D255 and S258. N-linked (GlcNAc...) asparagine glycans are attached at residues N259 and N273.

The protein belongs to the peroxidase family. Classical plant (class III) peroxidase subfamily. Requires heme b as cofactor. It depends on Ca(2+) as a cofactor.

It localises to the secreted. The enzyme catalyses 2 a phenolic donor + H2O2 = 2 a phenolic radical donor + 2 H2O. Functionally, removal of H(2)O(2), oxidation of toxic reductants, biosynthesis and degradation of lignin, suberization, auxin catabolism, response to environmental stresses such as wounding, pathogen attack and oxidative stress. The enzyme activity has to be proved. This chain is Probable peroxidase 26 (PER26), found in Arabidopsis thaliana (Mouse-ear cress).